A 1054-amino-acid chain; its full sequence is Cell wall acid trehalase ARB_03719 (1054 aa).

Positions 1-24 are cleaved as a signal peptide; the sequence is MKQPNINLAACILWLLSIITAVAA. Residues asparagine 138, asparagine 178, asparagine 183, asparagine 207, asparagine 239, asparagine 277, and asparagine 309 are each glycosylated (N-linked (GlcNAc...) asparagine). 450 to 451 is a substrate binding site; it reads WD. N-linked (GlcNAc...) asparagine glycosylation is found at asparagine 495, asparagine 515, asparagine 572, and asparagine 580. Residue glutamate 586 is the Proton donor of the active site. N-linked (GlcNAc...) asparagine glycosylation is found at asparagine 620 and asparagine 648. Residue 654–655 coordinates substrate; it reads KQ. Residues asparagine 808 and asparagine 844 are each glycosylated (N-linked (GlcNAc...) asparagine). The interval 950 to 974 is disordered; sequence PLHPVTDPENGDASGSSPTTPASSV. The span at 962–974 shows a compositional bias: low complexity; the sequence is ASGSSPTTPASSV. N-linked (GlcNAc...) asparagine glycans are attached at residues asparagine 1004, asparagine 1007, and asparagine 1039.

This sequence belongs to the glycosyl hydrolase 65 family.

It is found in the secreted. It localises to the cell wall. The catalysed reaction is alpha,alpha-trehalose + H2O = alpha-D-glucose + beta-D-glucose. Cell wall acid trehalase that catalyzes hydrolysis of the disaccharide trehalose and required for growth on trehalose as carbon source. Plays a role in virulence. This chain is Cell wall acid trehalase ARB_03719, found in Arthroderma benhamiae (strain ATCC MYA-4681 / CBS 112371) (Trichophyton mentagrophytes).